We begin with the raw amino-acid sequence, 321 residues long: Lipoyl synthase (321 aa).

[4Fe-4S] cluster contacts are provided by Cys68, Cys73, Cys79, Cys94, Cys98, Cys101, and Ser308. A Radical SAM core domain is found at 80 to 297; the sequence is FNHGTATFMI…KAAAMDMGFT (218 aa).

The protein belongs to the radical SAM superfamily. Lipoyl synthase family. Requires [4Fe-4S] cluster as cofactor.

The protein localises to the cytoplasm. The catalysed reaction is [[Fe-S] cluster scaffold protein carrying a second [4Fe-4S](2+) cluster] + N(6)-octanoyl-L-lysyl-[protein] + 2 oxidized [2Fe-2S]-[ferredoxin] + 2 S-adenosyl-L-methionine + 4 H(+) = [[Fe-S] cluster scaffold protein] + N(6)-[(R)-dihydrolipoyl]-L-lysyl-[protein] + 4 Fe(3+) + 2 hydrogen sulfide + 2 5'-deoxyadenosine + 2 L-methionine + 2 reduced [2Fe-2S]-[ferredoxin]. It participates in protein modification; protein lipoylation via endogenous pathway; protein N(6)-(lipoyl)lysine from octanoyl-[acyl-carrier-protein]: step 2/2. Catalyzes the radical-mediated insertion of two sulfur atoms into the C-6 and C-8 positions of the octanoyl moiety bound to the lipoyl domains of lipoate-dependent enzymes, thereby converting the octanoylated domains into lipoylated derivatives. The polypeptide is Lipoyl synthase (Erwinia tasmaniensis (strain DSM 17950 / CFBP 7177 / CIP 109463 / NCPPB 4357 / Et1/99)).